The primary structure comprises 141 residues: Large ribosomal subunit protein uL22 (141 aa).

The disordered stretch occupies residues 110–141 (EEKKTVAKKTTTTKAPAKKTTSTKKATAKKES). Positions 117–134 (KKTTTTKAPAKKTTSTKK) are enriched in low complexity.

This sequence belongs to the universal ribosomal protein uL22 family. In terms of assembly, part of the 50S ribosomal subunit.

Functionally, this protein binds specifically to 23S rRNA; its binding is stimulated by other ribosomal proteins, e.g. L4, L17, and L20. It is important during the early stages of 50S assembly. It makes multiple contacts with different domains of the 23S rRNA in the assembled 50S subunit and ribosome. Its function is as follows. The globular domain of the protein is located near the polypeptide exit tunnel on the outside of the subunit, while an extended beta-hairpin is found that lines the wall of the exit tunnel in the center of the 70S ribosome. The sequence is that of Large ribosomal subunit protein uL22 from Campylobacter jejuni subsp. doylei (strain ATCC BAA-1458 / RM4099 / 269.97).